Here is a 1015-residue protein sequence, read N- to C-terminus: Cytosolic carboxypeptidase 1 (1015 aa).

Positions 384 to 462 (LPTATPSTPG…GALPKTTRLN (79 aa)) are disordered. Residues 416–451 (EDGMDEEDEAFVRDDDDEGKDDRGSDDDDGKDDDEI) show a composition bias toward acidic residues. The Peptidase M14 domain occupies 727 to 1013 (YPYTYSFLNS…DLLHSFLEMT (287 aa)). His792, Glu795, and His891 together coordinate Zn(2+). Catalysis depends on Glu977, which acts as the Proton donor/acceptor.

This sequence belongs to the peptidase M14 family. Zn(2+) is required as a cofactor. As to expression, in hermaphrodites and males, expressed in amphid and IL2 ciliated sensory neurons. In males, expressed in CEM head neurons, RnB and HOB tail neurons, and in gubernacular erector and retractor muscles.

The protein localises to the perikaryon. The protein resides in the cell projection. Its subcellular location is the cilium. It localises to the dendrite. Catalyzes the deglutamylation of polyglutamate side chains generated by post-translational polyglutamylation of proteins such as tubulins. Via the deglutamylation of tubulin, regulates the localization and velocity of kinesin motors and the structural integrity of microtubules in sensory cilia. In male CEM sensory neurons, regulates the cilia release of bioactive extracellular vesicles. Also regulates microtubule dynamics in uterine muscle cells. The chain is Cytosolic carboxypeptidase 1 from Caenorhabditis elegans.